We begin with the raw amino-acid sequence, 367 residues long: Probable 7-methylxanthine methyltransferase 2 (367 aa).

Y20 is an S-adenosyl-L-homocysteine binding site. T27 contributes to the theobromine binding site. Residues C64, Q69, D101, L102, S134, and F135 each coordinate S-adenosyl-L-homocysteine. Theobromine contacts are provided by Y152, H155, and W156. The Mg(2+) site is built by N172, D258, F260, and N261. F313 contributes to the theobromine binding site.

Belongs to the methyltransferase superfamily. Type-7 methyltransferase family. Mg(2+) is required as a cofactor.

It catalyses the reaction 7-methylxanthine + S-adenosyl-L-methionine = theobromine + S-adenosyl-L-homocysteine + H(+). Its pathway is alkaloid biosynthesis. Functionally, involved in the biosynthesis of theobromine. In Theobroma cacao (Cacao), this protein is Probable 7-methylxanthine methyltransferase 2.